The primary structure comprises 470 residues: Dendritic cell-specific transmembrane protein (470 aa).

Residues 1 to 33 lie on the Cytoplasmic side of the membrane; sequence MRLWTLGTSIFLRLWGTYVFPRSPSWLDFIQHL. Residues 34-54 form a helical membrane-spanning segment; sequence GVCCFVAFLSVSLFSAAFYWI. Leucine 55 is a topological domain (extracellular). Residues 56 to 76 traverse the membrane as a helical segment; that stretch reads PPVALLSSVWMITCVFLCCSK. The Cytoplasmic segment spans residues 77–97; it reads RARCFILLAVLSCGLREGRNA. Residues 98-118 form a helical membrane-spanning segment; sequence LIAAGTGVVIFGHVENIFYNF. Residues 119-209 lie on the Extracellular side of the membrane; it reads RGLLDSMTCN…MVVTTELLTS (91 aa). Residues 210–230 traverse the membrane as a helical segment; it reads VGQKLLALAGLLLILVSTGLF. Residues 231-292 are Cytoplasmic-facing; it reads LKRFLGPCGW…LQLTPKEKKT (62 aa). The helical transmembrane segment at 293–313 threads the bilayer; the sequence is LGLFFLPVLTYLYMWVLFAAV. Residues 314–376 lie on the Extracellular side of the membrane; the sequence is DYLLYRLISS…PKPRLSVSET (63 aa). Residues 377–397 form a helical membrane-spanning segment; it reads WVPLSIILLTLIILGLLSSML. Residues 398–470 are Cytoplasmic-facing; sequence MQLKILVSVS…QTIPANEDDL (73 aa).

Interacts with CREB3. Monomer. Homodimer. Isoform 1 interacts (via the C-terminus cytoplasmic tail) with OS9 isoform 1 (via the C-terminus tail); the interaction induces DCSTAMP redistribution to the endoplasmic reticulum-Golgi intermediate compartment. Isoform 1 interacts (via the C-terminus cytoplasmic tail) with OS9 isoform 2 (via the C-terminus tail). In terms of processing, glycosylated. As to expression, expressed in macrophages and bone marrow dendritic cells (BM-DC). Weakly expressed in the spleen and lymph node. Highly expressed in multi-nuclear osteoclasts compared to mono-nuclear macrophages. Expressed in foreign body giant cells (FBGCs). Isoform 1 and isoform 2 are expressed in osteoclasts.

The protein resides in the cell membrane. It is found in the endoplasmic reticulum membrane. Its subcellular location is the endoplasmic reticulum-Golgi intermediate compartment membrane. It localises to the endosome. Its function is as follows. Probable cell surface receptor that plays several roles in cellular fusion, cell differentiation, bone and immune homeostasis. Plays a role in TNFSF11-mediated osteoclastogenesis. Cooperates with OCSTAMP in modulating cell-cell fusion in both osteoclasts and foreign body giant cells (FBGCs). Participates in osteoclast bone resorption. Involved in inducing the expression of tartrate-resistant acid phosphatase in osteoclast precursors. Plays a role in haematopoietic stem cell differentiation of bone marrow cells toward the myeloid lineage. Inhibits the development of neutrophilic granulocytes. Plays also a role in the regulation of dendritic cell (DC) antigen presentation activity by controlling phagocytic activity. Involved in the maintenance of immune self-tolerance and avoidance of autoimmune reactions. The polypeptide is Dendritic cell-specific transmembrane protein (Dcstamp) (Mus musculus (Mouse)).